Reading from the N-terminus, the 111-residue chain is Photosystem II reaction center Psb28 protein (111 aa).

It belongs to the Psb28 family. In terms of assembly, part of the photosystem II complex.

It is found in the cellular thylakoid membrane. The chain is Photosystem II reaction center Psb28 protein from Crocosphaera subtropica (strain ATCC 51142 / BH68) (Cyanothece sp. (strain ATCC 51142)).